A 260-amino-acid polypeptide reads, in one-letter code: Small ribosomal subunit protein uS3 (260 aa).

A KH type-2 domain is found at 39–114; it reads LRQYIEQKLG…QIRINVVEVQ (76 aa). A disordered region spans residues 219–260; the sequence is EVAAPPPSTRDRDRDRGDRDREPRRRQQQRRRQQFEDRSNEG. Composition is skewed to basic and acidic residues over residues 227 to 243 and 251 to 260; these read TRDR…EPRR and QQFEDRSNEG.

It belongs to the universal ribosomal protein uS3 family. As to quaternary structure, part of the 30S ribosomal subunit. Forms a tight complex with proteins S10 and S14.

Its function is as follows. Binds the lower part of the 30S subunit head. Binds mRNA in the 70S ribosome, positioning it for translation. This Trichormus variabilis (strain ATCC 29413 / PCC 7937) (Anabaena variabilis) protein is Small ribosomal subunit protein uS3.